The primary structure comprises 229 residues: Cytidylate kinase (229 aa).

Position 12-20 (12-20) interacts with ATP; sequence GPSGAGKGT.

Belongs to the cytidylate kinase family. Type 1 subfamily.

Its subcellular location is the cytoplasm. The enzyme catalyses CMP + ATP = CDP + ADP. It carries out the reaction dCMP + ATP = dCDP + ADP. The polypeptide is Cytidylate kinase (Serratia proteamaculans (strain 568)).